Consider the following 94-residue polypeptide: Acylphosphatase (94 aa).

The Acylphosphatase-like domain maps to 3 to 90; that stretch reads RVHVIVEGRV…PDEKQFRIMY (88 aa). Residues Arg18 and Asn36 contribute to the active site.

It belongs to the acylphosphatase family.

The enzyme catalyses an acyl phosphate + H2O = a carboxylate + phosphate + H(+). This chain is Acylphosphatase (acyP), found in Geobacillus thermodenitrificans (strain NG80-2).